Reading from the N-terminus, the 176-residue chain is NAD(P)H-quinone oxidoreductase subunit 6, chloroplastic (176 aa).

5 helical membrane passes run 10–30, 32–52, 61–81, 95–115, and 152–172; these read FLLV…VLFT, PIFS…LYIL, AQLL…VMFM, VGDG…ISTI, and FFLP…GAIS.

This sequence belongs to the complex I subunit 6 family. NDH is composed of at least 16 different subunits, 5 of which are encoded in the nucleus.

It localises to the plastid. The protein resides in the chloroplast thylakoid membrane. The enzyme catalyses a plastoquinone + NADH + (n+1) H(+)(in) = a plastoquinol + NAD(+) + n H(+)(out). It catalyses the reaction a plastoquinone + NADPH + (n+1) H(+)(in) = a plastoquinol + NADP(+) + n H(+)(out). In terms of biological role, NDH shuttles electrons from NAD(P)H:plastoquinone, via FMN and iron-sulfur (Fe-S) centers, to quinones in the photosynthetic chain and possibly in a chloroplast respiratory chain. The immediate electron acceptor for the enzyme in this species is believed to be plastoquinone. Couples the redox reaction to proton translocation, and thus conserves the redox energy in a proton gradient. The sequence is that of NAD(P)H-quinone oxidoreductase subunit 6, chloroplastic (ndhG) from Aethionema grandiflorum (Persian stone-cress).